A 2082-amino-acid polypeptide reads, in one-letter code: Autophagy-related protein 2 (2082 aa).

10 disordered regions span residues 108–130, 144–175, 285–343, 365–435, 462–527, 580–636, 662–702, 912–943, 1435–1454, and 2062–2082; these read SADQDTHRSPTDDTGDDHVLPNP, EEKEELQAAISSQSQVLQHTSTSSSDDEEEFG, TAPP…VPEA, TEET…STFN, TGSF…RDGD, RSQC…SFES, SRDG…RSQD, SGVKAQKEPPKRSRGVHFEPSPPPVKESRQPS, DAASPEHAAEGSSDLAQPAN, and GAGNTLDPSNRRKMEDKYKRH. Over residues 111 to 126 the composition is skewed to basic and acidic residues; sequence QDTHRSPTDDTGDDHV. 2 stretches are compositionally biased toward polar residues: residues 152-162 and 311-329; these read AISSQSQVLQH and PELNPSDSNPGLGMTQSTI. Basic and acidic residues-rich tracts occupy residues 397-430 and 489-500; these read IDSHLHDEDLERSVNLPRDDAPSAREEDTPRLHD and QHAEEPQHEVRA. Low complexity predominate over residues 503–522; it reads SGSQPAPPSEEGSSSSTSNS. Basic and acidic residues-rich tracts occupy residues 588 to 597, 622 to 633, and 690 to 702; these read NRTRDEKDET, RTAHSEATDKGS, and HSERRSYPKRSQD. A compositionally biased stretch (basic and acidic residues) spans 2070-2082; that stretch reads SNRRKMEDKYKRH.

Belongs to the ATG2 family.

The protein localises to the preautophagosomal structure membrane. It localises to the endoplasmic reticulum membrane. The enzyme catalyses a 1,2-diacyl-sn-glycero-3-phosphocholine(in) = a 1,2-diacyl-sn-glycero-3-phosphocholine(out). It carries out the reaction a 1,2-diacyl-sn-glycero-3-phospho-L-serine(in) = a 1,2-diacyl-sn-glycero-3-phospho-L-serine(out). The catalysed reaction is a 1,2-diacyl-sn-glycero-3-phosphoethanolamine(in) = a 1,2-diacyl-sn-glycero-3-phosphoethanolamine(out). Lipid transfer protein required for autophagosome completion and peroxisome degradation. Tethers the edge of the isolation membrane (IM) to the endoplasmic reticulum (ER) and mediates direct lipid transfer from ER to IM for IM expansion. Atg2 binds to the ER exit site (ERES), which is the membrane source for autophagosome formation, using basic residues in its N-terminal region (NR) and to the expanding edge of the IM through its C-terminal region. The latter binding is assisted by an atg18-PtdIns3P interaction. Atg2 then extracts phospholipids from the membrane source using its NR and transfers them to atg9 to the IM through its predicted beta-sheet-rich structure for membrane expansion. This is Autophagy-related protein 2 (atg2) from Aspergillus terreus (strain NIH 2624 / FGSC A1156).